The primary structure comprises 548 residues: Glucose-6-phosphate isomerase (548 aa).

Catalysis depends on Glu-355, which acts as the Proton donor. Residues His-386 and Lys-514 contribute to the active site.

Belongs to the GPI family.

The protein resides in the cytoplasm. It carries out the reaction alpha-D-glucose 6-phosphate = beta-D-fructose 6-phosphate. The protein operates within carbohydrate biosynthesis; gluconeogenesis. It participates in carbohydrate degradation; glycolysis; D-glyceraldehyde 3-phosphate and glycerone phosphate from D-glucose: step 2/4. Catalyzes the reversible isomerization of glucose-6-phosphate to fructose-6-phosphate. This is Glucose-6-phosphate isomerase from Hamiltonella defensa subsp. Acyrthosiphon pisum (strain 5AT).